A 245-amino-acid chain; its full sequence is Carbohydrate deacetylase 1 (245 aa).

His59 and His125 together coordinate Mg(2+).

Belongs to the YdjC deacetylase family. In terms of assembly, homodimer. Requires Mg(2+) as cofactor.

Functionally, probably catalyzes the deacetylation of acetylated carbohydrates an important step in the degradation of oligosaccharides. This chain is Carbohydrate deacetylase 1, found in Listeria innocua serovar 6a (strain ATCC BAA-680 / CLIP 11262).